A 924-amino-acid polypeptide reads, in one-letter code: Protein translocase subunit SecA (924 aa).

Residues Gln-87, 105–109 (GEGKT), and Asp-515 each bind ATP. Zn(2+) is bound by residues Cys-908, Cys-910, Cys-919, and His-920.

Belongs to the SecA family. Monomer and homodimer. Part of the essential Sec protein translocation apparatus which comprises SecA, SecYEG and auxiliary proteins SecDF-YajC and YidC. Zn(2+) serves as cofactor.

It localises to the cell inner membrane. The protein resides in the cytoplasm. The enzyme catalyses ATP + H2O + cellular proteinSide 1 = ADP + phosphate + cellular proteinSide 2.. Part of the Sec protein translocase complex. Interacts with the SecYEG preprotein conducting channel. Has a central role in coupling the hydrolysis of ATP to the transfer of proteins into and across the cell membrane, serving both as a receptor for the preprotein-SecB complex and as an ATP-driven molecular motor driving the stepwise translocation of polypeptide chains across the membrane. This chain is Protein translocase subunit SecA, found in Cupriavidus pinatubonensis (strain JMP 134 / LMG 1197) (Cupriavidus necator (strain JMP 134)).